The sequence spans 75 residues: Cytochrome c oxidase assembly factor 5 (75 aa).

A CHCH domain is found at 28-66 (QHDCVVKEGKKPSECLKEGHCRSMQVAFFECKRSMLDTR). Positions 31 to 42 (CVVKEGKKPSEC) match the Cx10C motif motif. Intrachain disulfides connect C31/C58 and C42/C48. The Cx9C motif signature appears at 48-58 (CRSMQVAFFEC).

It belongs to the PET191 family.

In terms of biological role, involved in an early step of the mitochondrial complex IV assembly process. The chain is Cytochrome c oxidase assembly factor 5 (coa5) from Danio rerio (Zebrafish).